Here is a 278-residue protein sequence, read N- to C-terminus: Protein U52 (278 aa).

Polar residues predominate over residues 1–18; it reads MTRVSSVSASCTTTNPPK. Positions 1-25 are disordered; that stretch reads MTRVSSVSASCTTTNPPKNTREDMS.

This sequence belongs to the herpesviridae UL79 family.

This Elephas maximus (Indian elephant) protein is Protein U52.